We begin with the raw amino-acid sequence, 162 residues long: Endoribonuclease YbeY (162 aa).

His126, His130, and His136 together coordinate Zn(2+).

Belongs to the endoribonuclease YbeY family. It depends on Zn(2+) as a cofactor.

The protein localises to the cytoplasm. In terms of biological role, single strand-specific metallo-endoribonuclease involved in late-stage 70S ribosome quality control and in maturation of the 3' terminus of the 16S rRNA. In Fusobacterium nucleatum subsp. nucleatum (strain ATCC 25586 / DSM 15643 / BCRC 10681 / CIP 101130 / JCM 8532 / KCTC 2640 / LMG 13131 / VPI 4355), this protein is Endoribonuclease YbeY.